A 226-amino-acid polypeptide reads, in one-letter code: Lipoprotein-releasing system ATP-binding protein LolD (226 aa).

Residues 6 to 226 (IELKSVERHY…TLADGKVVPL (221 aa)) enclose the ABC transporter domain. 42–49 (APSGTGKS) contributes to the ATP binding site.

The protein belongs to the ABC transporter superfamily. Lipoprotein translocase (TC 3.A.1.125) family. As to quaternary structure, the complex is composed of two ATP-binding proteins (LolD) and two transmembrane proteins (LolC and LolE).

Its subcellular location is the cell inner membrane. Its function is as follows. Part of the ABC transporter complex LolCDE involved in the translocation of mature outer membrane-directed lipoproteins, from the inner membrane to the periplasmic chaperone, LolA. Responsible for the formation of the LolA-lipoprotein complex in an ATP-dependent manner. This is Lipoprotein-releasing system ATP-binding protein LolD from Mesorhizobium japonicum (strain LMG 29417 / CECT 9101 / MAFF 303099) (Mesorhizobium loti (strain MAFF 303099)).